Here is a 355-residue protein sequence, read N- to C-terminus: Ribosomal RNA large subunit methyltransferase M (355 aa).

S-adenosyl-L-methionine-binding positions include S183, 216 to 219 (SPGG), D235, D255, and D271. K300 functions as the Proton acceptor in the catalytic mechanism.

The protein belongs to the class I-like SAM-binding methyltransferase superfamily. RNA methyltransferase RlmE family. RlmM subfamily. Monomer.

Its subcellular location is the cytoplasm. It carries out the reaction cytidine(2498) in 23S rRNA + S-adenosyl-L-methionine = 2'-O-methylcytidine(2498) in 23S rRNA + S-adenosyl-L-homocysteine + H(+). Its function is as follows. Catalyzes the 2'-O-methylation at nucleotide C2498 in 23S rRNA. This chain is Ribosomal RNA large subunit methyltransferase M, found in Pseudomonas putida (strain W619).